A 261-amino-acid chain; its full sequence is MSDSISVIREKLNQVTSEHDPFFRKCMQDERKGVEKLLETTRRKWEKEAQLRNKLEEMKQYETDLFQQGYKYIAGVDEVGRGPLAGPVVAAAVILPADFSVVGINDSKQLSEAKRDALFETIKKEAIAIGVGIIEHDVIDQVNIYEATKLAMREALDQLTPEPDFVLIDAMPLRYTEAELSLIKGDTKSISIAAASIIAKVTRDRLMQMYDEKYPGYDFANNMGYGTKKHLLGLDTIGICPIHRISFAPVKEAKLHFDSLK.

In terms of domain architecture, RNase H type-2 spans 71 to 259 (KYIAGVDEVG…VKEAKLHFDS (189 aa)). 3 residues coordinate a divalent metal cation: aspartate 77, glutamate 78, and aspartate 169.

This sequence belongs to the RNase HII family. Requires Mn(2+) as cofactor. Mg(2+) is required as a cofactor.

It is found in the cytoplasm. The enzyme catalyses Endonucleolytic cleavage to 5'-phosphomonoester.. Functionally, endonuclease that specifically degrades the RNA of RNA-DNA hybrids. This Listeria monocytogenes serotype 4b (strain F2365) protein is Ribonuclease HII.